The primary structure comprises 251 residues: GTP cyclohydrolase 1 type 2 homolog (251 aa).

H64, H65, D102, H219, and E223 together coordinate a divalent metal cation.

Belongs to the GTP cyclohydrolase I type 2/NIF3 family. Homohexamer.

This is GTP cyclohydrolase 1 type 2 homolog from Chlamydia trachomatis serovar D (strain ATCC VR-885 / DSM 19411 / UW-3/Cx).